We begin with the raw amino-acid sequence, 527 residues long: Organic cation/carnitine transporter 2 (527 aa).

Topologically, residues 1–27 (MAEPTQPLLTDSNSSSPRSLDDTIESY) are cytoplasmic. The helical transmembrane segment at 28-48 (IGSFGWAQFLQAALVSFSGVF) threads the bilayer. Residues 49-119 (DAQQTFISVF…SFVKGLPESS (71 aa)) lie on the Extracellular side of the membrane. The helical transmembrane segment at 120–140 (FFVGCLIGGLVLSTLADSSLG) threads the bilayer. The Cytoplasmic segment spans residues 141 to 149 (RKNMLFLSC). Residues 150 to 170 (LVMAISTMLTVFSPNIWVYAV) traverse the membrane as a helical segment. The Extracellular portion of the chain corresponds to 171-176 (LRFVNG). Residues 177-195 (FGRATIGTCALVLSTELVG) traverse the membrane as a helical segment. ATP is bound at residue 190-197 (STELVGKK). Residues 196 to 201 (KKWRGR) lie on the Cytoplasmic side of the membrane. A helical transmembrane segment spans residues 202 to 222 (VGIMSFFGFMLGFLSLPLMAY). Over 223–230 (MNRGSSWR) the chain is Extracellular. The helical transmembrane segment at 231–251 (ILYAWTSIPTIIYCVLVRFFV) threads the bilayer. At 252–326 (CESPRWLFVR…LVEKRWALKR (75 aa)) the chain is on the cytoplasmic side. The helical transmembrane segment at 327 to 347 (LSAVMAIAFGIGLVYYGMPLA) threads the bilayer. Topologically, residues 348–356 (LSNLDFNIY) are extracellular. Residues 357 to 377 (LSAAFNALMDLPANLITLFLV) form a helical membrane-spanning segment. The Cytoplasmic segment spans residues 378–385 (DKLSRRNA). Residues 386-406 (LIGFTALGGVSSVLIFALHNM) traverse the membrane as a helical segment. Over 407 to 415 (RIGNHGALQ) the chain is Extracellular. The chain crosses the membrane as a helical span at residues 416–436 (LALELISYFSACSAFNMEMIY). The Cytoplasmic segment spans residues 437–448 (TIELFPTCVRNS). The helical transmembrane segment at 449–469 (AIAMARQALVLGGVFSPIMVA) threads the bilayer. Topologically, residues 470–475 (AGRKNA) are extracellular. The chain crosses the membrane as a helical span at residues 476 to 496 (FWSFGLFGLAIGLLGLFAVGL). Topologically, residues 497-527 (PETRGSDLCDTMDEEECKDRRSKVAVNNVIA) are cytoplasmic.

Belongs to the major facilitator (TC 2.A.1) superfamily. Organic cation transporter (TC 2.A.1.19) family. As to expression, weakly expressed in roots, including tips and initiation site of lateral roots, siliques and flowers, especially in pollen and stigma.

It localises to the vacuole membrane. In terms of biological role, high affinity carnitine transporter involved in the active cellular uptake of carnitine. Also transports organic cations. The protein is Organic cation/carnitine transporter 2 (OCT2) of Arabidopsis thaliana (Mouse-ear cress).